A 377-amino-acid chain; its full sequence is Opsin-1 (377 aa).

Residues Met1–Gly58 lie on the Extracellular side of the membrane. A glycan (N-linked (GlcNAc...) asparagine) is linked at Asn24. Residues Phe59 to Phe79 traverse the membrane as a helical segment. At Met80–Leu92 the chain is on the cytoplasmic side. Residues Val93–Val113 form a helical membrane-spanning segment. Over Asn114–Leu129 the chain is Extracellular. A disulfide bridge links Cys127 with Cys204. A helical membrane pass occupies residues Tyr130 to Phe150. Residues Asp151–Gly169 are Cytoplasmic-facing. A helical transmembrane segment spans residues Ala170–Phe190. Residues Gly191 to Leu220 are Extracellular-facing. An N-linked (GlcNAc...) asparagine glycan is attached at Asn200. A helical membrane pass occupies residues Ile221–Ile241. The Cytoplasmic segment spans residues Val242–Lys280. The chain crosses the membrane as a helical span at residues Val281–Tyr301. Topologically, residues Thr302–Pro312 are extracellular. The chain crosses the membrane as a helical span at residues Leu313–Ile335. At Ser336–Ala377 the chain is on the cytoplasmic side. A disordered region spans residues Pro357–Ala377.

It belongs to the G-protein coupled receptor 1 family. Opsin subfamily. In terms of tissue distribution, in the retina, expression is abundant and uniform in the anterior-posterior and oblique cells of the retinulae, with some expression in the proximal cells. There is no expression in the dorsal rim retinulae (at protein level).

It is found in the cell projection. It localises to the rhabdomere membrane. Functionally, visual pigments are the light-absorbing molecules that mediate vision. They consist of an apoprotein, opsin, covalently linked to cis-retinal. May play a role in photoperiodic photoreception. This is Opsin-1 (OP1) from Manduca sexta (Tobacco hawkmoth).